Consider the following 689-residue polypeptide: Protein SDA1 homolog (689 aa).

Residues 254 to 319 (KKNTKNKKKL…RFEVKLMHMD (66 aa)) are a coiled coil. 2 disordered regions span residues 485 to 512 (EQEKTEEPEEDDGWESASLSDDDEDGEW) and 606 to 689 (KPKS…RLMK). A compositionally biased stretch (basic and acidic residues) spans 668 to 681 (SFRDKQIALRDSLL).

Belongs to the SDA1 family.

The protein localises to the nucleus. The protein resides in the nucleolus. In terms of biological role, required for 60S pre-ribosomal subunits export to the cytoplasm. The sequence is that of Protein SDA1 homolog (sdad1) from Xenopus tropicalis (Western clawed frog).